The following is a 76-amino-acid chain: UPF0248 protein MmarC6_0667 (76 aa).

This sequence belongs to the UPF0248 family.

In Methanococcus maripaludis (strain C6 / ATCC BAA-1332), this protein is UPF0248 protein MmarC6_0667.